A 1163-amino-acid polypeptide reads, in one-letter code: DNA-directed RNA polymerase subunit beta 2 (1163 aa).

It belongs to the RNA polymerase beta chain family. The RNAP catalytic core consists of 2 alpha, 1 beta, 1 beta' and 1 omega subunit. When a sigma factor is associated with the core the holoenzyme is formed, which can initiate transcription.

The catalysed reaction is RNA(n) + a ribonucleoside 5'-triphosphate = RNA(n+1) + diphosphate. In terms of biological role, DNA-dependent RNA polymerase catalyzes the transcription of DNA into RNA using the four ribonucleoside triphosphates as substrates. This chain is DNA-directed RNA polymerase subunit beta 2, found in Nocardia farcinica (strain IFM 10152).